The primary structure comprises 255 residues: Sorbose reductase sou1 (255 aa).

NADP(+)-binding residues include I21 and N95. Active-site proton donor residues include S148 and Y163. The NADP(+) site is built by Y163, K167, I195, and T197. K167 serves as the catalytic Lowers pKa of active site Tyr.

This sequence belongs to the short-chain dehydrogenases/reductases (SDR) family.

The enzyme catalyses D-sorbitol + NADP(+) = keto-L-sorbose + NADPH + H(+). Functionally, catalyzes the NADP dependent reduction of L-sorbose to D-glucitol. This chain is Sorbose reductase sou1 (sou1), found in Schizosaccharomyces pombe (strain 972 / ATCC 24843) (Fission yeast).